The primary structure comprises 489 residues: L-asparagine permease 1 (489 aa).

12 helical membrane passes run 25 to 45 (QLQMIGIGGAIGTGLFLGASG), 49 to 69 (KAGPGLFLVYGVCGVFVFLIL), 100 to 120 (AVGWMYFLHWAMTSIVDTTAI), 137 to 157 (ILALIALTVVLSMNLISVEWF), 162 to 182 (FWAALIKVLALMAFLVVGTVF), 210 to 230 (WLPLLIVTSGVVFAYSAVELV), 255 to 275 (IAIFYVGSVALLALLLPYTAY), 289 to 309 (IGFHGAGDLMNIVVLTAALSS), 344 to 364 (YGGIVLTAVITLFGVALNAFK), 369 to 389 (FEIVLNMSALGIIAGWATIVL), 413 to 433 (SPYSGYLTLLFLLVVLVTMAS), and 439 to 459 (TWTVATLIIVIPALTAGWYLV).

It belongs to the amino acid-polyamine-organocation (APC) superfamily. Amino acid transporter (AAT) (TC 2.A.3.1) family.

It is found in the cell membrane. This is L-asparagine permease 1 (ansP1) from Mycobacterium bovis (strain ATCC BAA-935 / AF2122/97).